The following is a 24-amino-acid chain: Humanin-like 1 (24 aa).

It belongs to the humanin family. As to expression, highly expressed in the kidney, heart muscle and testis.

Its subcellular location is the secreted. The protein resides in the cytoplasm. Its function is as follows. Plays a role as a neuroprotective and antiapoptotic factor. The chain is Humanin-like 1 from Homo sapiens (Human).